Consider the following 92-residue polypeptide: Cell division topological specificity factor (92 aa).

It belongs to the MinE family.

Functionally, prevents the cell division inhibition by proteins MinC and MinD at internal division sites while permitting inhibition at polar sites. This ensures cell division at the proper site by restricting the formation of a division septum at the midpoint of the long axis of the cell. The sequence is that of Cell division topological specificity factor from Desulforamulus reducens (strain ATCC BAA-1160 / DSM 100696 / MI-1) (Desulfotomaculum reducens).